A 305-amino-acid polypeptide reads, in one-letter code: GMP synthase [glutamine-hydrolyzing] subunit B (305 aa).

Residues 2–184 (VKPEKFIPKA…LQLPEEICER (183 aa)) enclose the GMPS ATP-PPase domain. Residue 29–35 (SGGVDSS) coordinates ATP.

Heterodimer composed of a glutamine amidotransferase subunit (A) and a GMP-binding subunit (B).

It carries out the reaction XMP + L-glutamine + ATP + H2O = GMP + L-glutamate + AMP + diphosphate + 2 H(+). Its pathway is purine metabolism; GMP biosynthesis; GMP from XMP (L-Gln route): step 1/1. In terms of biological role, catalyzes the synthesis of GMP from XMP. The chain is GMP synthase [glutamine-hydrolyzing] subunit B (guaAB) from Methanosarcina acetivorans (strain ATCC 35395 / DSM 2834 / JCM 12185 / C2A).